A 127-amino-acid polypeptide reads, in one-letter code: Thioredoxin domain-containing protein 8 (127 aa).

A Thioredoxin domain is found at 1 to 92 (MVQIIKDTNE…SQKVTLFSRI (92 aa)). A disulfide bridge links cysteine 32 with cysteine 35.

Belongs to the thioredoxin family. In terms of tissue distribution, testis-specific. Only expressed during spermiogenesis, prominently in the Golgi apparatus of pachytene spermatocytes and round and elongated spermatids, with a transient localization in the developing acrosome of round spermatids (at protein level).

The protein resides in the cytoplasm. The protein localises to the golgi apparatus. In terms of biological role, may be required for post-translational modifications of proteins required for acrosomal biogenesis. May act by reducing disulfide bonds within the sperm. In Homo sapiens (Human), this protein is Thioredoxin domain-containing protein 8 (TXNDC8).